The chain runs to 244 residues: Small ribosomal subunit protein uS2m (244 aa).

The protein belongs to the universal ribosomal protein uS2 family.

Its subcellular location is the mitochondrion. In Dictyostelium discoideum (Social amoeba), this protein is Small ribosomal subunit protein uS2m (mrps2).